We begin with the raw amino-acid sequence, 500 residues long: Glycogen synthase (500 aa).

An ADP-alpha-D-glucose-binding site is contributed by lysine 15.

It belongs to the glycosyltransferase 1 family. Bacterial/plant glycogen synthase subfamily.

The enzyme catalyses [(1-&gt;4)-alpha-D-glucosyl](n) + ADP-alpha-D-glucose = [(1-&gt;4)-alpha-D-glucosyl](n+1) + ADP + H(+). It functions in the pathway glycan biosynthesis; glycogen biosynthesis. In terms of biological role, synthesizes alpha-1,4-glucan chains using ADP-glucose. The chain is Glycogen synthase from Protochlamydia amoebophila (strain UWE25).